The following is a 179-amino-acid chain: MSSRVLTPDVVGIDALVHDHQTVLAKAEGGVVAVFANNAPAFYAVTPARLAELLALEEKLARPGSDVALDEQLYQEPQAAPVAVPMGKFAMYPDWQPDADFIRLAALWGVALREPVTTEELASFIAYWQAEGKVFHHVQWQQKLARSLQIGRASNGGLPKRDVNTVSEPDSQIPPGFRG.

The disordered stretch occupies residues 156–179 (GGLPKRDVNTVSEPDSQIPPGFRG).

This sequence belongs to the DnaT family. Homooligomerizes. Interacts with PriB. Component of the replication restart primosome. Primosome assembly occurs via a 'hand-off' mechanism. PriA binds to replication forks, subsequently PriB then DnaT bind; DnaT then displaces ssDNA to generate the helicase loading substrate.

Functionally, involved in the restart of stalled replication forks, which reloads the replicative helicase on sites other than the origin of replication. Can function in multiple replication restart pathways. Displaces ssDNA from a PriB-ssDNA complex. Probably forms a spiral filament on ssDNA. In Shigella dysenteriae serotype 1 (strain Sd197), this protein is Replication restart protein DnaT.